Here is a 190-residue protein sequence, read N- to C-terminus: MMMTMAADYGSSEGHYDTPWEFLARPNSVRFSTADVRLSTSAAGDAKVSPHGSPSLCSSSSFVNQLVQIGNSAVDARRKVPRDESKRRRPSDSEIYMEQNMNRVEAEKRLENRNLGDYLLRSRGEGSAALSLRATKGVVHIKIEWNGEKWVIGEGPLFRSISSAISFYRRHPLPIRGADHLVLKNQLKPV.

The 95-residue stretch at 96 to 190 (YMEQNMNRVE…LVLKNQLKPV (95 aa)) folds into the SH2 domain.

Interacts with abl-1. As to expression, expressed in PQR, but not AQR, Q neuroblast descendents.

Functionally, functions downstream of migratory protein mig-13 and may play a role in the control of Q neuroblast migration during larval development. This is Protein soem-1 from Caenorhabditis elegans.